We begin with the raw amino-acid sequence, 539 residues long: Protein mushroom body miniature (539 aa).

Residues 1–11 (MHNSGGQSGWN) are compositionally biased toward polar residues. A disordered region spans residues 1-345 (MHNSGGQSGW…EDDKKARKQK (345 aa)). Residues 67–79 (KFRDPQQELDNHQ) show a composition bias toward basic and acidic residues. Over residues 80-89 (PNKRGGRRNR) the composition is skewed to basic residues. Residues 90–101 (GGGGGGGGWGGR) are compositionally biased toward gly residues. Basic and acidic residues predominate over residues 199 to 208 (IKKEKEMEHK). Residues 268–289 (VASTPKPKAVKPVSSSDSSTSD) are compositionally biased toward low complexity. Phosphoserine occurs at positions 288 and 290. 2 positions are modified to phosphothreonine: Thr292 and Thr327. The span at 327–336 (TDEEESTEPE) shows a compositional bias: acidic residues. A Phosphoserine modification is found at Ser332. Thr333 carries the post-translational modification Phosphothreonine. 2 CCHC-type zinc fingers span residues 354 to 367 (CGICDKKGHTSFQC) and 371 to 386 (CRNCSGSYHGLKNCPN). The segment at 421–513 (VTAPVSAKPK…AASLPPQVFP (93 aa)) is disordered. Residues 428–447 (KPKKDKKASIKKIKKSSQKR) show a composition bias toward basic residues. Residues 456–480 (DEEDDEEDDDEDEDDSSESDDSESS) show a composition bias toward acidic residues.

In terms of processing, may be phosphorylated in vivo by CkIIalpha. mbm and CkIIalpha colocalize to the nucleolus and mbm is phosphorylated in vitro by CkIIalpha. Shows widespread expression in third instar larval brain with no apparent difference between males and females (at protein level). Detected at low levels in the mushroom body neuropil and is also expressed in many cells of the brain outside the mushroom body (at protein level). Not detected in third instar larval brain cells in anaphase (at protein level).

Its subcellular location is the nucleus. It is found in the nucleolus. It localises to the cytoplasm. In terms of biological role, required for small ribosomal subunit biogenesis in neuroblasts. Plays a role in mushroom body development. This chain is Protein mushroom body miniature, found in Drosophila melanogaster (Fruit fly).